A 130-amino-acid chain; its full sequence is MAQVEYKGTGRRKHSVARVRLIPGEGNITINGRDVRDYLPFESLILDLNQPFDITETKGNYDVLVNVNGGGLTGQAQAIRHGISRALLEADPEYRGSLKRAGMLTRDPRMKERKKPGLKGARRSPQFSKR.

Residues 98–130 (LKRAGMLTRDPRMKERKKPGLKGARRSPQFSKR) form a disordered region. The segment covering 111–130 (KERKKPGLKGARRSPQFSKR) has biased composition (basic residues).

The protein belongs to the universal ribosomal protein uS9 family.

This is Small ribosomal subunit protein uS9 from Macrococcus caseolyticus (strain JCSC5402) (Macrococcoides caseolyticum).